Reading from the N-terminus, the 159-residue chain is uncharacterized protein (159 aa).

The segment covering Met1–Gln13 has biased composition (polar residues). Residues Met1–Cys57 form a disordered region. A compositionally biased stretch (low complexity) spans Gly14 to Ser35. A compositionally biased stretch (basic and acidic residues) spans Gln38 to Glu47.

This is an uncharacterized protein from Homo sapiens (Human).